Consider the following 418-residue polypeptide: Voltage-gated ClC-type chloride channel ClcB (418 aa).

10 helical membrane-spanning segments follow: residues 5-25, 54-74, 146-166, 168-188, 222-242, 258-278, 291-311, 316-336, 352-372, and 380-400; these read LLIA…FRHA, LLTP…WQKF, LWIA…PLAG, LFIA…PVII, ALII…LTLM, WQLA…PAVW, APPL…AVLA, GAPG…GMLY, LLLG…APIM, and MTGE…ASVI.

Belongs to the chloride channel (TC 2.A.49) family. ClcB subfamily.

It localises to the cell inner membrane. Its function is as follows. Probably acts as an electrical shunt for an outwardly-directed proton pump that is linked to amino acid decarboxylation, as part of the extreme acid resistance (XAR) response. The sequence is that of Voltage-gated ClC-type chloride channel ClcB from Escherichia coli O17:K52:H18 (strain UMN026 / ExPEC).